The primary structure comprises 95 residues: Citrate lyase acyl carrier protein (95 aa).

Ser14 is subject to O-(phosphoribosyl dephospho-coenzyme A)serine.

This sequence belongs to the CitD family. As to quaternary structure, oligomer with a subunit composition of (alpha,beta,gamma)6.

The protein resides in the cytoplasm. Its function is as follows. Covalent carrier of the coenzyme of citrate lyase. In Haemophilus ducreyi (strain 35000HP / ATCC 700724), this protein is Citrate lyase acyl carrier protein.